A 248-amino-acid chain; its full sequence is Putative TrmH family tRNA/rRNA methyltransferase (248 aa).

Positions 196, 216, and 225 each coordinate S-adenosyl-L-methionine.

This sequence belongs to the class IV-like SAM-binding methyltransferase superfamily. RNA methyltransferase TrmH family.

The protein is Putative TrmH family tRNA/rRNA methyltransferase of Staphylococcus aureus (strain Mu50 / ATCC 700699).